The chain runs to 428 residues: tRNA modification GTPase MnmE (428 aa).

Positions 20, 77, and 117 each coordinate (6S)-5-formyl-5,6,7,8-tetrahydrofolate. The region spanning 213–351 (GFEVAIIGPP…LVQRISDVLK (139 aa)) is the TrmE-type G domain. Asn-223 is a K(+) binding site. GTP contacts are provided by residues 223–228 (NAGKST), 242–248 (SEVAGTT), and 267–270 (DTAG). Ser-227 is a Mg(2+) binding site. K(+)-binding residues include Ser-242, Val-244, and Thr-247. Thr-248 provides a ligand contact to Mg(2+). Lys-428 serves as a coordination point for (6S)-5-formyl-5,6,7,8-tetrahydrofolate.

Belongs to the TRAFAC class TrmE-Era-EngA-EngB-Septin-like GTPase superfamily. TrmE GTPase family. As to quaternary structure, homodimer. Heterotetramer of two MnmE and two MnmG subunits. Requires K(+) as cofactor.

Its subcellular location is the cytoplasm. Functionally, exhibits a very high intrinsic GTPase hydrolysis rate. Involved in the addition of a carboxymethylaminomethyl (cmnm) group at the wobble position (U34) of certain tRNAs, forming tRNA-cmnm(5)s(2)U34. This is tRNA modification GTPase MnmE from Ruegeria pomeroyi (strain ATCC 700808 / DSM 15171 / DSS-3) (Silicibacter pomeroyi).